The following is a 338-amino-acid chain: 4-hydroxythreonine-4-phosphate dehydrogenase (338 aa).

Substrate is bound by residues H136 and T137. A divalent metal cation-binding residues include H173, H218, and H273. Residues K281, N290, and R299 each contribute to the substrate site.

The protein belongs to the PdxA family. In terms of assembly, homodimer. Requires Zn(2+) as cofactor. It depends on Mg(2+) as a cofactor. Co(2+) serves as cofactor.

The protein resides in the cytoplasm. It catalyses the reaction 4-(phosphooxy)-L-threonine + NAD(+) = 3-amino-2-oxopropyl phosphate + CO2 + NADH. It functions in the pathway cofactor biosynthesis; pyridoxine 5'-phosphate biosynthesis; pyridoxine 5'-phosphate from D-erythrose 4-phosphate: step 4/5. In terms of biological role, catalyzes the NAD(P)-dependent oxidation of 4-(phosphooxy)-L-threonine (HTP) into 2-amino-3-oxo-4-(phosphooxy)butyric acid which spontaneously decarboxylates to form 3-amino-2-oxopropyl phosphate (AHAP). The protein is 4-hydroxythreonine-4-phosphate dehydrogenase of Ralstonia nicotianae (strain ATCC BAA-1114 / GMI1000) (Ralstonia solanacearum).